The following is an 87-amino-acid chain: Cell division topological specificity factor (87 aa).

The protein belongs to the MinE family.

Prevents the cell division inhibition by proteins MinC and MinD at internal division sites while permitting inhibition at polar sites. This ensures cell division at the proper site by restricting the formation of a division septum at the midpoint of the long axis of the cell. The protein is Cell division topological specificity factor of Herpetosiphon aurantiacus (strain ATCC 23779 / DSM 785 / 114-95).